Reading from the N-terminus, the 440-residue chain is Histidinol dehydrogenase (440 aa).

NAD(+) contacts are provided by Tyr-139, Gln-201, and Asn-224. 3 residues coordinate substrate: Ser-247, Gln-269, and His-272. Zn(2+) is bound by residues Gln-269 and His-272. Residues Glu-337 and His-338 each act as proton acceptor in the active site. 4 residues coordinate substrate: His-338, Asp-371, Glu-425, and His-430. Asp-371 provides a ligand contact to Zn(2+). His-430 provides a ligand contact to Zn(2+).

It belongs to the histidinol dehydrogenase family. It depends on Zn(2+) as a cofactor.

It carries out the reaction L-histidinol + 2 NAD(+) + H2O = L-histidine + 2 NADH + 3 H(+). The protein operates within amino-acid biosynthesis; L-histidine biosynthesis; L-histidine from 5-phospho-alpha-D-ribose 1-diphosphate: step 9/9. In terms of biological role, catalyzes the sequential NAD-dependent oxidations of L-histidinol to L-histidinaldehyde and then to L-histidine. The sequence is that of Histidinol dehydrogenase from Prochlorococcus marinus (strain MIT 9312).